Reading from the N-terminus, the 401-residue chain is 8-amino-7-oxononanoate synthase (401 aa).

Arginine 24 contacts substrate. 111–112 (GF) is a pyridoxal 5'-phosphate binding site. Residue histidine 137 coordinates substrate. Pyridoxal 5'-phosphate-binding residues include serine 183, histidine 211, and threonine 240. The residue at position 243 (lysine 243) is an N6-(pyridoxal phosphate)lysine. A substrate-binding site is contributed by threonine 357.

This sequence belongs to the class-II pyridoxal-phosphate-dependent aminotransferase family. BioF subfamily. As to quaternary structure, homodimer. Pyridoxal 5'-phosphate is required as a cofactor.

The catalysed reaction is 6-carboxyhexanoyl-[ACP] + L-alanine + H(+) = (8S)-8-amino-7-oxononanoate + holo-[ACP] + CO2. It participates in cofactor biosynthesis; biotin biosynthesis. Its function is as follows. Catalyzes the decarboxylative condensation of pimeloyl-[acyl-carrier protein] and L-alanine to produce 8-amino-7-oxononanoate (AON), [acyl-carrier protein], and carbon dioxide. The chain is 8-amino-7-oxononanoate synthase from Xylella fastidiosa (strain M12).